The following is a 502-amino-acid chain: Sporulation-specific protein 2 (502 aa).

The signal sequence occupies residues 1-56 (MPIWKTQTFFTSISVIQIVNKETKVSTKKEKDSMLNQLNTILRFLFLFLQLIKSSA). N-linked (GlcNAc...) asparagine glycosylation is found at N77, N135, N285, N303, N340, N343, and N355. A disordered region spans residues 441–474 (EGNVLGKQETDNDNGKKEKGKNGAKSQGSSKKME). The segment covering 448-461 (QETDNDNGKKEKGK) has biased composition (basic and acidic residues). The GPI-anchor amidated asparagine moiety is linked to residue N475. A propeptide spans 476-502 (SAPKNIFIDAFKMSVYAVFTVLFSIIF) (removed in mature form).

This sequence belongs to the SPS2 family.

The protein resides in the cell membrane. Functionally, involved in middle stages of meiosis. Redundant with SPS22 for the organization of the beta-glucan layer of the spore wall. The sequence is that of Sporulation-specific protein 2 (SPS2) from Saccharomyces cerevisiae (strain ATCC 204508 / S288c) (Baker's yeast).